The chain runs to 339 residues: Catalase-related peroxidase (339 aa).

The signal sequence occupies residues 1 to 31; it reads MIRIRNRWFRWLAIALASLVASIGIATVGFA. His58 is an active-site residue. Tyr328 contributes to the heme binding site.

The protein belongs to the catalase family. Requires heme as cofactor.

It is found in the periplasm. Functionally, has an organic peroxide-dependent peroxidase activity. The sequence is that of Catalase-related peroxidase (srpA) from Synechococcus elongatus (strain ATCC 33912 / PCC 7942 / FACHB-805) (Anacystis nidulans R2).